Reading from the N-terminus, the 100-residue chain is Urease subunit gamma (100 aa).

The protein belongs to the urease gamma subunit family. As to quaternary structure, heterotrimer of UreA (gamma), UreB (beta) and UreC (alpha) subunits. Three heterotrimers associate to form the active enzyme.

It is found in the cytoplasm. The catalysed reaction is urea + 2 H2O + H(+) = hydrogencarbonate + 2 NH4(+). It functions in the pathway nitrogen metabolism; urea degradation; CO(2) and NH(3) from urea (urease route): step 1/1. The protein is Urease subunit gamma of Corynebacterium glutamicum (strain R).